We begin with the raw amino-acid sequence, 127 residues long: S1-like domain-containing protein C146.08c (127 aa).

The S1-like domain maps to 10-86 (SFDPPARLEK…NKIDGTILYV (77 aa)). The disordered stretch occupies residues 107-127 (ESLNQNDSEESSSSEEEYDSD). The span at 113 to 127 (DSEESSSSEEEYDSD) shows a compositional bias: acidic residues. A Phosphotyrosine modification is found at Y124. The residue at position 126 (S126) is a Phosphoserine.

The protein belongs to the EIF1AD family.

The protein localises to the cytoplasm. Its subcellular location is the nucleus. The sequence is that of S1-like domain-containing protein C146.08c from Schizosaccharomyces pombe (strain 972 / ATCC 24843) (Fission yeast).